Here is a 347-residue protein sequence, read N- to C-terminus: Uroporphyrinogen decarboxylase (347 aa).

Residues 24 to 28, Phe-42, Asp-73, Tyr-150, Thr-205, and His-320 each bind substrate; that span reads RQAGR.

Belongs to the uroporphyrinogen decarboxylase family. Homodimer.

It is found in the cytoplasm. It carries out the reaction uroporphyrinogen III + 4 H(+) = coproporphyrinogen III + 4 CO2. It functions in the pathway porphyrin-containing compound metabolism; protoporphyrin-IX biosynthesis; coproporphyrinogen-III from 5-aminolevulinate: step 4/4. Catalyzes the decarboxylation of four acetate groups of uroporphyrinogen-III to yield coproporphyrinogen-III. This Gloeobacter violaceus (strain ATCC 29082 / PCC 7421) protein is Uroporphyrinogen decarboxylase.